We begin with the raw amino-acid sequence, 108 residues long: DNA-directed RNA polymerase III subunit RPC10 (108 aa).

Cys5, Cys8, Cys25, Cys28, Cys69, and Cys72 together coordinate Zn(2+). A C4-type zinc finger spans residues 5-28 (CPGCGNGLIVEEGQRCHRFACNTC). The TFIIS-type zinc-finger motif lies at 65-107 (TAEPCPKCEHPRAYFMQLQTRYADEPMTTFYKCCNAQCGHRWR). The Hairpin signature appears at 88 to 89 (DE). 2 residues coordinate Zn(2+): Cys98 and Cys102.

The protein belongs to the archaeal RpoM/eukaryotic RPA12/RPB9/RPC11 RNA polymerase family. Component of the RNA polymerase III complex consisting of 17 subunits: a ten-subunit horseshoe-shaped catalytic core composed of POLR3A/RPC1, POLR3B/RPC2, POLR1C/RPAC1, POLR1D/RPAC2, POLR3K/RPC10, POLR2E/RPABC1, POLR2F/RPABC2, POLR2H/RPABC3, POLR2K/RPABC4 and POLR2L/RPABC5; a mobile stalk composed of two subunits POLR3H/RPC8 and CRCP/RPC9, protruding from the core and functioning primarily in transcription initiation; and additional subunits homologous to general transcription factors of the RNA polymerase II machinery, POLR3C/RPC3-POLR3F/RPC6-POLR3G/RPC7 heterotrimer required for transcription initiation and POLR3D/RPC4-POLR3E/RPC5 heterodimer involved in both transcription initiation and termination.

The protein localises to the nucleus. Core component of RNA polymerase III (Pol III) which synthesizes small non-coding RNAs using the four ribonucleoside triphosphates as substrates. Can mediate Pol I proofreading of the nascent RNA transcript. Anchors into the Pol III active site to constantly monitor transcription fidelity, cleaves mis-incorporated 5'-ribonucleotides and restarts the transcription process. Once Pol III reaches the poly(dT) termination signal, can induce Pol III clamp opening and transcription termination. Pol III plays an important role in sensing and limiting infection by intracellular bacteria and DNA viruses. Acts as a nuclear and cytosolic DNA sensor involved in innate immune response. Can sense non-self dsDNA that serves as template for transcription into dsRNA. The non-self RNA polymerase III transcripts, such as Epstein-Barr virus-encoded RNAs (EBERs) induce type I interferon and NF-kappa-B through the RIG-I pathway. The polypeptide is DNA-directed RNA polymerase III subunit RPC10 (POLR3K) (Bos taurus (Bovine)).